A 134-amino-acid chain; its full sequence is B3 domain-containing protein At1g16640 (134 aa).

Positions Val7–Asn100 form a DNA-binding region, TF-B3.

It is found in the nucleus. This is B3 domain-containing protein At1g16640 from Arabidopsis thaliana (Mouse-ear cress).